Here is a 117-residue protein sequence, read N- to C-terminus: Non-specific lipid-transfer protein (117 aa).

A signal peptide spans 1–26 (MASSAVIKLACAVLLCIVVAAPYAEA). 4 disulfides stabilise this stretch: Cys-30–Cys-76, Cys-40–Cys-53, Cys-54–Cys-99, and Cys-74–Cys-113.

This sequence belongs to the plant LTP family.

Its function is as follows. Plant non-specific lipid-transfer proteins transfer phospholipids as well as galactolipids across membranes. May play a role in wax or cutin deposition in the cell walls of expanding epidermal cells and certain secretory tissues. The polypeptide is Non-specific lipid-transfer protein (Spinacia oleracea (Spinach)).